The sequence spans 91 residues: Large ribosomal subunit protein uL23 (91 aa).

The protein belongs to the universal ribosomal protein uL23 family. As to quaternary structure, part of the 50S ribosomal subunit. Contacts protein L29.

Functionally, binds to 23S rRNA. One of the proteins that surrounds the polypeptide exit tunnel on the outside of the ribosome. This Staphylothermus marinus (strain ATCC 43588 / DSM 3639 / JCM 9404 / F1) protein is Large ribosomal subunit protein uL23.